The following is a 159-amino-acid chain: Ribosomal RNA large subunit methyltransferase H (159 aa).

S-adenosyl-L-methionine-binding positions include Leu-76, Gly-108, and 127–132 (FSKMTF).

Belongs to the RNA methyltransferase RlmH family. Homodimer.

The protein resides in the cytoplasm. It carries out the reaction pseudouridine(1915) in 23S rRNA + S-adenosyl-L-methionine = N(3)-methylpseudouridine(1915) in 23S rRNA + S-adenosyl-L-homocysteine + H(+). Specifically methylates the pseudouridine at position 1915 (m3Psi1915) in 23S rRNA. This Exiguobacterium sp. (strain ATCC BAA-1283 / AT1b) protein is Ribosomal RNA large subunit methyltransferase H.